The chain runs to 57 residues: Three-finger toxin Tschuditoxin-I (57 aa).

Disulfide bonds link C3/C22, C17/C39, and C41/C52.

In terms of tissue distribution, expressed by the venom gland.

It is found in the secreted. Produces peripheral paralysis by blocking neuromuscular transmission at the postsynaptic site. Binds to and inhibits the endogenous nicotinic acetylcholine receptors (nAChR). This neurotoxin is lethal to mice by intraperitoneal or intravenous injection. This chain is Three-finger toxin Tschuditoxin-I, found in Micrurus tschudii (Desert coral snake).